The chain runs to 132 residues: Small ribosomal subunit protein uS9 (132 aa).

Belongs to the universal ribosomal protein uS9 family.

The sequence is that of Small ribosomal subunit protein uS9 from Baumannia cicadellinicola subsp. Homalodisca coagulata.